A 536-amino-acid chain; its full sequence is Feruloyl esterase B (536 aa).

An N-terminal signal peptide occupies residues 1 to 20; it reads MKTSIVLSIVALFLTSKASA. The CBM10 domain maps to 21–59; sequence DCWSERLGWPCCSDSNAEVIYVDDDGDWGVENNDWCGIQ. Residues 22-59 are cellulose-binding; sequence CWSERLGWPCCSDSNAEVIYVDDDGDWGVENNDWCGIQ. The N-linked (GlcNAc...) asparagine glycan is linked to asparagine 65. Repeat copies occupy residues 78–90, 91–103, 104–116, 117–129, 134–146, 151–163, 164–176, 181–193, 194–206, 211–223, 224–236, and 237–249. A 12 X 13 AA repeats of N-Q-G-G-G-M-[PQ]-W-G-D-F-G-G region spans residues 78 to 249; sequence NQGGGMPWGD…GGMQWGDFGG (172 aa). Residues 203 to 252 are compositionally biased toward gly residues; it reads DFGGNQGGNQGGGMPWGDFGGNQGGGMQWGDFGGNQGGGMQWGDFGGNQG. Positions 203 to 273 are disordered; sequence DFGGNQGGNQ…SGPTVEYSTD (71 aa). The tract at residues 257 to 536 is catalytic; it reads WGNQGGNSGP…WDFVKQFSLP (280 aa).

In terms of assembly, component of the multienzyme cellulase-hemicellulase complex.

The protein resides in the secreted. The catalysed reaction is feruloyl-polysaccharide + H2O = ferulate + polysaccharide.. Its activity is regulated as follows. Inhibited by the specific serine esterase inhibitor AEBSF. Involved in degradation of plant cell walls. Hydrolyzes of the feruloyl-arabinose ester bond in arabinoxylans as well as the feruloyl-galactose and feruloyl-arabinose ester bonds in pectin. The chain is Feruloyl esterase B (ESTA) from Piromyces equi.